The primary structure comprises 96 residues: NADH-ubiquinone oxidoreductase chain 4L (96 aa).

The next 3 membrane-spanning stretches (helical) occupy residues 1-21, 27-47, and 61-81; these read MELM…ALSL, MLAL…LVMF, and IILL…VVAI.

It belongs to the complex I subunit 4L family.

Its subcellular location is the mitochondrion membrane. It catalyses the reaction a ubiquinone + NADH + 5 H(+)(in) = a ubiquinol + NAD(+) + 4 H(+)(out). Core subunit of the mitochondrial membrane respiratory chain NADH dehydrogenase (Complex I) which catalyzes electron transfer from NADH through the respiratory chain, using ubiquinone as an electron acceptor. Part of the enzyme membrane arm which is embedded in the lipid bilayer and involved in proton translocation. This chain is NADH-ubiquinone oxidoreductase chain 4L (MT-ND4L), found in Lycodon semicarinatus (Ryukyu odd-tooth snake).